Consider the following 215-residue polypeptide: Pyrrolidone-carboxylate peptidase (215 aa).

Catalysis depends on residues glutamate 80, cysteine 143, and histidine 167.

It belongs to the peptidase C15 family. In terms of assembly, homotetramer.

Its subcellular location is the cytoplasm. The enzyme catalyses Release of an N-terminal pyroglutamyl group from a polypeptide, the second amino acid generally not being Pro.. Functionally, removes 5-oxoproline from various penultimate amino acid residues except L-proline. The sequence is that of Pyrrolidone-carboxylate peptidase from Bacillus mycoides (strain KBAB4) (Bacillus weihenstephanensis).